Reading from the N-terminus, the 152-residue chain is Transcriptional regulator MraZ (152 aa).

SpoVT-AbrB domains lie at A5–E52 and A81–A124.

Belongs to the MraZ family. As to quaternary structure, forms oligomers.

The protein resides in the cytoplasm. Its subcellular location is the nucleoid. The protein is Transcriptional regulator MraZ of Shewanella putrefaciens (strain CN-32 / ATCC BAA-453).